The primary structure comprises 530 residues: RNA-binding protein 39 (530 aa).

The segment at 1 to 146 (MADDIDIEAM…PVREPIDNLT (146 aa)) is disordered. Residue alanine 2 is modified to N-acetylalanine. Positions 14–32 (PYKKDENKLSSANGHEERS) are enriched in basic and acidic residues. 2 stretches are compositionally biased toward basic residues: residues 33-56 (KKRK…KERK) and 64-95 (KKSK…RGRY). Tyrosine 95 carries the phosphotyrosine modification. Serine 97 and serine 100 each carry phosphoserine. A Glycyl lysine isopeptide (Lys-Gly) (interchain with G-Cter in SUMO2) cross-link involves residue lysine 111. The residue at position 117 (serine 117) is a Phosphoserine. Residue lysine 119 forms a Glycyl lysine isopeptide (Lys-Gly) (interchain with G-Cter in SUMO2) linkage. The span at 119–130 (KLSRRRSRSKSP) shows a compositional bias: basic residues. Phosphoserine is present on residues serine 121 and serine 136. A compositionally biased stretch (basic and acidic residues) spans 131-146 (FRKDKSPVREPIDNLT). Threonine 146 is subject to Phosphothreonine. Positions 153 to 230 (RTVFCMQLAA…VPIIVQASQA (78 aa)) constitute an RRM 1 domain. A Glycyl lysine isopeptide (Lys-Gly) (interchain with G-Cter in SUMO2) cross-link involves residue lysine 244. The region spanning 250–328 (MRLYVGSLHF…RPMKVGHVTE (79 aa)) is the RRM 2 domain. Residues 291–355 (KGYGFITFSD…RTGIDLGTTG (65 aa)) are activating domain. Residues 291–406 (KGYGFITFSD…IDLQTRLSQQ (116 aa)) form an interaction with JUN region. Serine 334, serine 337, and serine 341 each carry phosphoserine. Residues 355-406 (GRLQLMARLAEGTGLQIPPAAQQALQMSGSLAFGAVAEFSFVIDLQTRLSQQ) are interaction with ESR1 and ESR2. The interval 406-530 (QTEASALAAA…ATQLLVPSRR (125 aa)) is interaction with NCOA6. Positions 445-508 (EIKDDVIEEC…KMITAAYVPL (64 aa)) constitute an RRM 3 domain.

This sequence belongs to the splicing factor SR family. Interacts with NCOA6 and JUN. Interacts with ESR1 and ESR2, in the presence of estradiol (E2). Interacts with RSRC1 (via Arg/Ser-rich domain). Interacts with SF3B1. Interacts with ZNF106 (via N-terminus). Post-translationally, aryl sulfonamide anticancer drugs, such as indisulam (E7070) or E7820, promote ubiquitination and subsequent degradation by the DCX(DCAF15) complex. RBM39 degradation results in splicing defects and death in cancer cell lines. Aryl sulfonamide anticancer drugs change the substrate specificity of DCAF15 by acting as a molecular glue that promotes binding between DCAF15 and weak affinity interactor RBM39. As to expression, widely expressed. Highly expressed in pancreas, skeletal muscle, lung and brain. Expressed at intermediate level in kidney, liver and heart.

It localises to the nucleus speckle. Functionally, RNA-binding protein that acts as a pre-mRNA splicing factor. Acts by promoting exon inclusion via regulation of exon cassette splicing. Also acts as a transcriptional coactivator for steroid nuclear receptors ESR1/ER-alpha and ESR2/ER-beta, and JUN/AP-1, independently of the pre-mRNA splicing factor activity. The protein is RNA-binding protein 39 of Homo sapiens (Human).